The chain runs to 215 residues: Pyridoxine/pyridoxamine 5'-phosphate oxidase (215 aa).

Substrate is bound by residues 9-12 (RRDY) and Lys-67. Residues 62-67 (RVVLLK), 77-78 (FT), Lys-84, and Gln-106 contribute to the FMN site. Tyr-124, Arg-128, and Ser-132 together coordinate substrate. FMN contacts are provided by residues 141-142 (QS) and Trp-186. Position 192–194 (192–194 (RLH)) interacts with substrate. Arg-196 is an FMN binding site.

It belongs to the pyridoxamine 5'-phosphate oxidase family. Homodimer. The cofactor is FMN.

The enzyme catalyses pyridoxamine 5'-phosphate + O2 + H2O = pyridoxal 5'-phosphate + H2O2 + NH4(+). It carries out the reaction pyridoxine 5'-phosphate + O2 = pyridoxal 5'-phosphate + H2O2. The protein operates within cofactor metabolism; pyridoxal 5'-phosphate salvage; pyridoxal 5'-phosphate from pyridoxamine 5'-phosphate: step 1/1. Its pathway is cofactor metabolism; pyridoxal 5'-phosphate salvage; pyridoxal 5'-phosphate from pyridoxine 5'-phosphate: step 1/1. In terms of biological role, catalyzes the oxidation of either pyridoxine 5'-phosphate (PNP) or pyridoxamine 5'-phosphate (PMP) into pyridoxal 5'-phosphate (PLP). The protein is Pyridoxine/pyridoxamine 5'-phosphate oxidase of Chromohalobacter salexigens (strain ATCC BAA-138 / DSM 3043 / CIP 106854 / NCIMB 13768 / 1H11).